Consider the following 56-residue polypeptide: Mitoregulin (56 aa).

Over Ala2–Leu9 the chain is Mitochondrial matrix. A helical transmembrane segment spans residues Gln10 to Ala27. At Asn28–Ala56 the chain is on the mitochondrial intermembrane side.

This sequence belongs to the mitoregulin family. Interacts with mitochondrial trifunctional enzyme, a heterotetrameric complex composed of 2 HADHA subunits and 2 HADHB subunits. Interacts with cytochrome b5 reductase CYB5R3; the interaction is required to maintain cellular lipid composition and leads to stimulation of mitochondrial respiratory complex I activity. Interacts with ATP synthase subunit ATP5F1B/ATP5B. As to expression, enriched in heart and skeletal muscle (at protein level). Also enriched in adipose tissue with lower levels detected in liver, pancreas and brain (at protein level). Higher levels in differentiated myotubes than in satellite cells.

The protein localises to the mitochondrion inner membrane. Positively regulates mitochondrial complex assembly and/or stability. Increases mitochondrial membrane potential while decreasing mitochondrial reactive oxygen species. Increases mitochondrial respiration rate. Increased mitochondrial respiratory activity promotes myogenic differentiation which facilitates muscle growth and regeneration. Increases mitochondrial calcium retention capacity. Plays a role in maintenance of cellular lipid composition through its interaction with cytochrome b5 reductase CYB5R3 which is required for mitochondrial respiratory complex I activity. Interacts with the mitochondrial trifunctional enzyme complex (MTE) and enhances fatty acid beta-oxidation. Not required for MTE formation or stability. Modulates triglyceride clearance in adipocytes through its role in regulating fatty acid beta-oxidation and lipolysis. This Mus musculus (Mouse) protein is Mitoregulin.